We begin with the raw amino-acid sequence, 428 residues long: Dual-specificity RNA methyltransferase RlmN (428 aa).

The span at 1 to 17 (MPLHRVEALGEPQDRTG) shows a compositional bias: basic and acidic residues. The segment at 1–44 (MPLHRVEALGEPQDRTGKTFSGRTNGPISSPLTDTERRMSIPQN) is disordered. Positions 18 to 33 (KTFSGRTNGPISSPLT) are enriched in polar residues. Catalysis depends on glutamate 136, which acts as the Proton acceptor. The Radical SAM core domain occupies 142-381 (EDDRGALCVS…APIRMPRGRD (240 aa)). Cysteines 149 and 386 form a disulfide. Residues cysteine 156, cysteine 160, and cysteine 163 each coordinate [4Fe-4S] cluster. S-adenosyl-L-methionine is bound by residues 212 to 213 (GE), serine 244, 266 to 268 (SLH), and asparagine 343. Catalysis depends on cysteine 386, which acts as the S-methylcysteine intermediate.

This sequence belongs to the radical SAM superfamily. RlmN family. Requires [4Fe-4S] cluster as cofactor.

Its subcellular location is the cytoplasm. The catalysed reaction is adenosine(2503) in 23S rRNA + 2 reduced [2Fe-2S]-[ferredoxin] + 2 S-adenosyl-L-methionine = 2-methyladenosine(2503) in 23S rRNA + 5'-deoxyadenosine + L-methionine + 2 oxidized [2Fe-2S]-[ferredoxin] + S-adenosyl-L-homocysteine. The enzyme catalyses adenosine(37) in tRNA + 2 reduced [2Fe-2S]-[ferredoxin] + 2 S-adenosyl-L-methionine = 2-methyladenosine(37) in tRNA + 5'-deoxyadenosine + L-methionine + 2 oxidized [2Fe-2S]-[ferredoxin] + S-adenosyl-L-homocysteine. In terms of biological role, specifically methylates position 2 of adenine 2503 in 23S rRNA and position 2 of adenine 37 in tRNAs. m2A2503 modification seems to play a crucial role in the proofreading step occurring at the peptidyl transferase center and thus would serve to optimize ribosomal fidelity. The sequence is that of Dual-specificity RNA methyltransferase RlmN from Rhodospirillum rubrum (strain ATCC 11170 / ATH 1.1.1 / DSM 467 / LMG 4362 / NCIMB 8255 / S1).